Consider the following 629-residue polypeptide: Protein SPT2 homolog (629 aa).

The interval 1–522 (MDFDSVLSIA…SGHRILVKPS (522 aa)) is important for interaction with DNA. A coiled-coil region spans residues 45–72 (QAFLKKKAVEQKNKEQQDKKAKEDLLAK). A compositionally biased stretch (basic and acidic residues) spans 53–93 (VEQKNKEQQDKKAKEDLLAKRVELKSDRKARAMASRTKDNF). 3 disordered regions span residues 53-181 (VEQK…ASSS), 206-533 (KTEE…TSSY), and 608-629 (EDEEEERRELEEMQRKNAKKRK). Over residues 111–123 (KGSSTEEQQSSTK) the composition is skewed to polar residues. Over residues 127–144 (GDYDDEDNFDYEGTDSES) the composition is skewed to acidic residues. Positions 203 to 228 (VVKKTEERLRTAEEIRELEMERRVKK) form a coiled coil. Composition is skewed to basic and acidic residues over residues 206-247 (KTEE…KDSR) and 257-277 (KHVDRDGKNGRFPRPSEEKHQ). 7 stretches are compositionally biased toward polar residues: residues 278–297 (SSSTSKKPKLQASSERTPTS), 305–327 (SNSGSSGALNSKSAMKNGASFQA), 335–345 (SQGQRPATPSD), 353–364 (VSLTQAKSSISG), 387–398 (SNFSTSGPSQKP), 437–450 (NLQSQQFPGSSRAS), and 462–490 (SGSQINRMSSGPGRSQCTVVSETISTKNI). Positions 523–629 (GPALPPITSS…MQRKNAKKRK (107 aa)) are important for interaction with histones. Residues 591–629 (WKEQQKEEARSLRMAVLEDEEEERRELEEMQRKNAKKRK) are a coiled coil.

This sequence belongs to the SPT2 family. Interacts with histones. Interacts with a heterotetrameric complex formed by histone H3 and H4, especially when the histone tetramer is not bound to DNA.

The protein resides in the nucleus. It localises to the nucleolus. Functionally, histone chaperone that stabilizes pre-existing histone tetramers and regulates replication-independent histone exchange on chromatin. Required for normal chromatin refolding in the coding region of transcribed genes, and for the suppression of spurious transcription. Binds DNA and histones and promotes nucleosome assembly (in vitro). Facilitates formation of tetrameric histone complexes containing histone H3 and H4. Modulates RNA polymerase 1-mediated transcription. Binds DNA, with a preference for branched DNA species, such as Y-form DNA and Holliday junction DNA. In Danio rerio (Zebrafish), this protein is Protein SPT2 homolog (spty2d1).